Reading from the N-terminus, the 257-residue chain is 1-(5-phosphoribosyl)-5-[(5-phosphoribosylamino)methylideneamino] imidazole-4-carboxamide isomerase (257 aa).

The active-site Proton acceptor is Asp-8. The active-site Proton donor is Asp-129.

Belongs to the HisA/HisF family.

Its subcellular location is the cytoplasm. It carries out the reaction 1-(5-phospho-beta-D-ribosyl)-5-[(5-phospho-beta-D-ribosylamino)methylideneamino]imidazole-4-carboxamide = 5-[(5-phospho-1-deoxy-D-ribulos-1-ylimino)methylamino]-1-(5-phospho-beta-D-ribosyl)imidazole-4-carboxamide. It functions in the pathway amino-acid biosynthesis; L-histidine biosynthesis; L-histidine from 5-phospho-alpha-D-ribose 1-diphosphate: step 4/9. This chain is 1-(5-phosphoribosyl)-5-[(5-phosphoribosylamino)methylideneamino] imidazole-4-carboxamide isomerase, found in Crocosphaera subtropica (strain ATCC 51142 / BH68) (Cyanothece sp. (strain ATCC 51142)).